The primary structure comprises 1050 residues: Probable beta-glucosidase E (1050 aa).

The tract at residues 1 to 87 (MPPPDSNPGS…RSSSTNGGHN (87 aa)) is disordered. At 1 to 174 (MPPPDSNPGS…VKYARIWRRT (174 aa)) the chain is on the cytoplasmic side. The segment covering 11-20 (FRDHLKHDNK) has biased composition (basic and acidic residues). Positions 47–56 (SPRSASASSS) are enriched in low complexity. Residues 78–87 (RSSSTNGGHN) are compositionally biased toward polar residues. Residues 175–195 (LVVVIVALALLVWGFLRFTAA) traverse the membrane as a helical; Signal-anchor for type II membrane protein segment. Residues 196-1050 (QRQGPKVWPM…SRDLPLQAKY (855 aa)) lie on the Extracellular side of the membrane. Residues asparagine 236, asparagine 244, asparagine 300, and asparagine 430 are each glycosylated (N-linked (GlcNAc...) asparagine). Aspartate 458 is a catalytic residue. Asparagine 501, asparagine 540, asparagine 605, asparagine 884, asparagine 920, asparagine 929, and asparagine 993 each carry an N-linked (GlcNAc...) asparagine glycan.

Belongs to the glycosyl hydrolase 3 family.

The protein localises to the cell membrane. It catalyses the reaction Hydrolysis of terminal, non-reducing beta-D-glucosyl residues with release of beta-D-glucose.. The protein operates within glycan metabolism; cellulose degradation. Beta-glucosidases are one of a number of cellulolytic enzymes involved in the degradation of cellulosic biomass. Catalyzes the last step releasing glucose from the inhibitory cellobiose. The polypeptide is Probable beta-glucosidase E (bglE) (Aspergillus clavatus (strain ATCC 1007 / CBS 513.65 / DSM 816 / NCTC 3887 / NRRL 1 / QM 1276 / 107)).